The chain runs to 162 residues: Caveolin-2 (162 aa).

At 1–86 the chain is on the cytoplasmic side; it reads MGLESEKADV…FEISKYVLYK (86 aa). Tyr19 carries the post-translational modification Phosphotyrosine. Residues Ser20, Ser23, and Ser36 each carry the phosphoserine modification. The helical intramembrane region spans 87–107; sequence FLTFFLAIPLAFAAGILFAIL. Over 108–162 the chain is Cytoplasmic; the sequence is SCLHIWIIMPFVKTCLMVLPSVQTIWKSVTDVVIAPLCTSVGRSFSSVSLQLSQD.

Belongs to the caveolin family. As to quaternary structure, monomer or homodimer. Interacts with CAV1; the interaction forms a stable heterooligomeric complex that is required for targeting to lipid rafts and for caveolae formation. Tyrosine phosphorylated forms do not form heterooligomers with the Tyr-19-phosphorylated form existing as a monomer or dimer. Interacts (tyrosine phosphorylated form) with the SH2 domain-containing proteins, RASA1, NCK1 and SRC. Interacts (tyrosine phosphorylated form) with INSR. Interacts (Tyr-19 phosphorylated form) with MAPK1 (phosphorylated form); the interaction, promoted by insulin, leads to nuclear location and MAPK1 activation. Interacts with STAT3; the interaction is increased on insulin-induced tyrosine phosphorylation leading to STAT activation. Post-translationally, phosphorylated on serine and tyrosine residues. CAV1 promotes phosphorylation on Ser-23 which then targets the complex to the plasma membrane, lipid rafts and caveolae. Phosphorylation on Ser-36 appears to modulate mitosis in endothelial cells. Phosphorylation on Tyr-19 is required for insulin-induced phosphorylation of MAPK1 and DNA binding of STAT3. Tyrosine phosphorylation is induced by both EGF and insulin.

It is found in the nucleus. It localises to the golgi apparatus membrane. The protein localises to the cell membrane. Its subcellular location is the membrane. The protein resides in the caveola. May act as a scaffolding protein within caveolar membranes. Interacts directly with G-protein alpha subunits and can functionally regulate their activity. Acts as an accessory protein in conjunction with CAV1 in targeting to lipid rafts and driving caveolae formation. The Ser-36 phosphorylated form has a role in modulating mitosis in endothelial cells. Positive regulator of cellular mitogenesis of the MAPK signaling pathway. Required for the insulin-stimulated nuclear translocation and activation of MAPK1 and STAT3, and the subsequent regulation of cell cycle progression. The polypeptide is Caveolin-2 (CAV2) (Echinops telfairi (Lesser hedgehog tenrec)).